Here is a 371-residue protein sequence, read N- to C-terminus: Protein IQ-DOMAIN 7 (371 aa).

Residues 1 to 32 (MGGSGNWIRSLISNRKPVNDQQEKLSDKSSKK) are disordered. Basic and acidic residues predominate over residues 17 to 29 (PVNDQQEKLSDKS). IQ domains are found at residues 93–121 (REWA…AVVR) and 122–144 (IQAI…CMQA). Residues 125 to 141 (IFRGRQVRKQAAVTLRC) are calmodulin-binding. Disordered regions lie at residues 285-308 (SGMS…PVAF) and 327-371 (LTQS…SQRS). Polar residues-rich tracts occupy residues 297–308 (STSSTSQSPVAF) and 327–341 (LTQS…SGLS).

This sequence belongs to the IQD family. Binds to multiple calmodulin (CaM) in the presence of Ca(2+) and CaM-like proteins.

The protein resides in the nucleus. Its subcellular location is the nucleus envelope. It is found in the cytoplasm. The protein localises to the cytoskeleton. In terms of biological role, may be involved in cooperative interactions with calmodulins or calmodulin-like proteins. Recruits calmodulin proteins to microtubules, thus being a potential scaffold in cellular signaling and trafficking. May associate with nucleic acids and regulate gene expression at the transcriptional or post-transcriptional level. This Arabidopsis thaliana (Mouse-ear cress) protein is Protein IQ-DOMAIN 7.